The sequence spans 206 residues: MGGKWSKSSVVGWPAVRERMRRAEPAADGVGAASRDLEKHGAITSSNTAANNAACAWLEAQEEEKVGFPVTPQVPLRPMTYKAAVDLSHFLKEKGGLEGLIHSQRRQDILDLWIYHTQGYFPDWQNYTPGPGIRYPLTFGWCYKLVPVEPEKLEEANKGENTSLLHPVSLHGMDDPEREVLEWRFDSRLAFHHVARELHPEYFKNC.

G2 carries N-myristoyl glycine; by host lipidation. S6 is subject to Phosphoserine; by host. The segment at 62-65 (EEEK) is acidic; interacts with host PACS1 and PACS2; stabilizes the interaction of NEF/MHC-I with host AP1M1; necessary for MHC-I internalization. Residues 69-78 (PVTPQVPLRP) are SH3-binding; interaction with Src family tyrosine kinases. Positions 72 to 75 (PQVP) match the PxxP; stabilizes the interaction of NEF/MHC-I with host AP1M1; necessary for MHC-I internalization motif. The tract at residues 108 to 124 (DILDLWIYHTQGYFPDW) is mediates dimerization, Nef-PTE1 interaction. The interval 148 to 180 (VEPEKLEEANKGENTSLLHPVSLHGMDDPEREV) is binding to ATP6V1H. Residues 164-165 (LL) carry the Dileucine internalization motif; necessary for CD4 internalization motif. The short motif at 174–175 (DD) is the Diacidic; necessary for CD4 internalization element.

Belongs to the lentivirus primate group Nef protein family. As to quaternary structure, monomer; cytosolic form. Homodimer; membrane bound form. Interacts with Nef associated p21-activated kinase (PAK2); this interaction activates PAK2. Associates with the Nef-MHC-I-AP1 complex; this complex is required for MHC-I internalization. Interacts (via C-terminus) with host PI3-kinase. Interacts with host PACS1; this interaction seems to be weak. Interacts with host PACS2. Interacts with host LCK and MAPK3; these interactions inhibit the kinase activity of the latter. Interacts with host ATP6V1H; this interaction may play a role in CD4 endocytosis. Associates with the CD4-Nef-AP2 complex; this complex is required for CD4 internalization. Interacts with host AP2 subunit alpha and AP2 subunit sigma2. Interacts with TCR-zeta chain; this interaction up-regulates the Fas ligand (FasL) surface expression. Interacts with host HCK, LYN, and SRC; these interactions activate the Src family kinases. Interacts with MAP3K5; this interaction inhibits the Fas and TNFR-mediated death signals. Interacts with beta-COP and PTE1. Interacts with human RACK1; this increases Nef phosphorylation by PKC. Interacts with TP53; this interaction decreases the half-life of TP53, protecting the infected cell against p53-mediated apoptosis. In terms of processing, the virion-associated Nef proteins are cleaved by the viral protease to release the soluble C-terminal core protein. Nef is probably cleaved concomitantly with viral structural proteins on maturation of virus particles. Myristoylated. Post-translationally, phosphorylated on serine residues, probably by host PKCdelta and theta.

The protein localises to the host cell membrane. It localises to the virion. It is found in the secreted. Its subcellular location is the host Golgi apparatus membrane. Factor of infectivity and pathogenicity, required for optimal virus replication. Alters numerous pathways of T-lymphocyte function and down-regulates immunity surface molecules in order to evade host defense and increase viral infectivity. Alters the functionality of other immunity cells, like dendritic cells, monocytes/macrophages and NK cells. Its function is as follows. In infected CD4(+) T-lymphocytes, down-regulates the surface MHC-I, mature MHC-II, CD4, CD28, CCR5 and CXCR4 molecules. Mediates internalization and degradation of host CD4 through the interaction of with the cytoplasmic tail of CD4, the recruitment of AP-2 (clathrin adapter protein complex 2), internalization through clathrin coated pits, and subsequent transport to endosomes and lysosomes for degradation. Diverts host MHC-I molecules to the trans-Golgi network-associated endosomal compartments by an endocytic pathway to finally target them for degradation. MHC-I down-regulation may involve AP-1 (clathrin adapter protein complex 1) or possibly Src family kinase-ZAP70/Syk-PI3K cascade recruited by PACS2. In consequence infected cells are masked for immune recognition by cytotoxic T-lymphocytes. Decreasing the number of immune receptors also prevents reinfection by more HIV particles (superinfection). Down-regulates host SERINC3 and SERINC5 thereby excluding these proteins from the viral particles. Virion infectivity is drastically higher when SERINC3 or SERINC5 are excluded from the viral envelope, because these host antiviral proteins impair the membrane fusion event necessary for subsequent virion penetration. In terms of biological role, bypasses host T-cell signaling by inducing a transcriptional program nearly identical to that of anti-CD3 cell activation. Interaction with TCR-zeta chain up-regulates the Fas ligand (FasL). Increasing surface FasL molecules and decreasing surface MHC-I molecules on infected CD4(+) cells send attacking cytotoxic CD8+ T-lymphocytes into apoptosis. Functionally, plays a role in optimizing the host cell environment for viral replication without causing cell death by apoptosis. Protects the infected cells from apoptosis in order to keep them alive until the next virus generation is ready to strike. Inhibits the Fas and TNFR-mediated death signals by blocking MAP3K5/ASK1. Decreases the half-life of TP53, protecting the infected cell against p53-mediated apoptosis. Inhibits the apoptotic signals regulated by the Bcl-2 family proteins through the formation of a Nef/PI3-kinase/PAK2 complex that leads to activation of PAK2 and induces phosphorylation of host BAD. Extracellular Nef protein targets CD4(+) T-lymphocytes for apoptosis by interacting with CXCR4 surface receptors. This is Protein Nef from Homo sapiens (Human).